Here is a 163-residue protein sequence, read N- to C-terminus: Putative ribose 5-phosphate isomerase (163 aa).

16–17 (DD) contacts D-ribulose 5-phosphate. Residue Cys76 is the Proton acceptor of the active site. D-ribulose 5-phosphate-binding positions include 77-81 (GTGLG), Asn110, Arg120, and Lys148.

The protein belongs to the LacAB/RpiB family. In terms of assembly, homodimer or homotetramer.

This is Putative ribose 5-phosphate isomerase from Coccidioides immitis (strain RS) (Valley fever fungus).